Reading from the N-terminus, the 253-residue chain is MTLSSTTPRPLIAGNWKMNGLSVALDEARAVAAALEAKPPAARVAIFPPATLLHRLSQAVEGAHLLTGGQDCHGKSSGAHTGDVSAEMVADAGGSLVICGHSERRTDHGETSAQVAGKAEAAAAAGLEPIVCVGETLETREAGQAVSFVVSQVRDSLPTSLAGKAFSVAYEPLWAIGTGRTASVDNIVEMHAAIRAELVSRFCEQGRTVLILYGGSVKPENAREILAAPEVGGALVGGASLKAKDFLAIIQAL.

15-17 (NWK) contributes to the substrate binding site. Catalysis depends on histidine 101, which acts as the Electrophile. Glutamate 171 functions as the Proton acceptor in the catalytic mechanism. Residues glycine 177, serine 216, and 237–238 (GG) contribute to the substrate site.

It belongs to the triosephosphate isomerase family. Homodimer.

It localises to the cytoplasm. It catalyses the reaction D-glyceraldehyde 3-phosphate = dihydroxyacetone phosphate. It participates in carbohydrate biosynthesis; gluconeogenesis. It functions in the pathway carbohydrate degradation; glycolysis; D-glyceraldehyde 3-phosphate from glycerone phosphate: step 1/1. Functionally, involved in the gluconeogenesis. Catalyzes stereospecifically the conversion of dihydroxyacetone phosphate (DHAP) to D-glyceraldehyde-3-phosphate (G3P). The sequence is that of Triosephosphate isomerase from Caulobacter vibrioides (strain ATCC 19089 / CIP 103742 / CB 15) (Caulobacter crescentus).